The following is a 267-amino-acid chain: 4-hydroxy-tetrahydrodipicolinate reductase (267 aa).

Residues 12 to 17 (GARGRM), aspartate 38, 100 to 102 (GTT), and 126 to 129 (APNF) contribute to the NAD(+) site. Histidine 156 serves as the catalytic Proton donor/acceptor. Histidine 157 contributes to the (S)-2,3,4,5-tetrahydrodipicolinate binding site. Lysine 160 acts as the Proton donor in catalysis. 166–167 (GT) is a (S)-2,3,4,5-tetrahydrodipicolinate binding site.

Belongs to the DapB family.

Its subcellular location is the cytoplasm. The catalysed reaction is (S)-2,3,4,5-tetrahydrodipicolinate + NAD(+) + H2O = (2S,4S)-4-hydroxy-2,3,4,5-tetrahydrodipicolinate + NADH + H(+). It catalyses the reaction (S)-2,3,4,5-tetrahydrodipicolinate + NADP(+) + H2O = (2S,4S)-4-hydroxy-2,3,4,5-tetrahydrodipicolinate + NADPH + H(+). The protein operates within amino-acid biosynthesis; L-lysine biosynthesis via DAP pathway; (S)-tetrahydrodipicolinate from L-aspartate: step 4/4. Functionally, catalyzes the conversion of 4-hydroxy-tetrahydrodipicolinate (HTPA) to tetrahydrodipicolinate. The protein is 4-hydroxy-tetrahydrodipicolinate reductase of Bacillus pumilus (strain SAFR-032).